Here is a 185-residue protein sequence, read N- to C-terminus: Large ribosomal subunit protein uL5 (185 aa).

Belongs to the universal ribosomal protein uL5 family. In terms of assembly, part of the 50S ribosomal subunit; part of the 5S rRNA/L5/L18/L25 subcomplex. Contacts the 5S rRNA and the P site tRNA. Forms a bridge to the 30S subunit in the 70S ribosome.

In terms of biological role, this is one of the proteins that bind and probably mediate the attachment of the 5S RNA into the large ribosomal subunit, where it forms part of the central protuberance. In the 70S ribosome it contacts protein S13 of the 30S subunit (bridge B1b), connecting the 2 subunits; this bridge is implicated in subunit movement. Contacts the P site tRNA; the 5S rRNA and some of its associated proteins might help stabilize positioning of ribosome-bound tRNAs. This Streptomyces coelicolor (strain ATCC BAA-471 / A3(2) / M145) protein is Large ribosomal subunit protein uL5.